The following is a 571-amino-acid chain: Hsp70-Hsp90 organizing protein 2 (571 aa).

TPR repeat units follow at residues 2–35 (ADEA…TPTN), 37–69 (VLFS…KPDW), and 70–103 (GKGY…DPSN). The segment at 117–137 (ASRSRASAPNPFGDAFQGPEM) is disordered. Residues 134–173 (GPEMWSKLTADPSTRGLLKQPDFVNMMKEIQRNPSNLNLY) enclose the STI1 1 domain. At Ser168 the chain carries Phosphoserine. Over residues 198 to 207 (DDMEIGEEEM) the composition is skewed to acidic residues. A disordered region spans residues 198–245 (DDMEIGEEEMAVPSRKEPEVEKKRKPEPEPEPEPEFGEEKQKKLKAQK). Basic and acidic residues-rich tracts occupy residues 211–225 (SRKE…KPEP) and 234–245 (GEEKQKKLKAQK). The short motif at 240-257 (KLKAQKEKELGNAAYKKK) is the Bipartite nuclear localization signal element. TPR repeat units lie at residues 243–276 (AQKE…DDED), 278–310 (SYIT…GREL), 322–355 (TRKG…HRNP), 382–415 (GDEE…NPKD), 417–449 (RAYS…DPTF), and 450–483 (LKGY…DPNN). Residues 520–559 (DPEIQNILTDPVMRQVLSDLQENPAAAQKHMQNPMIMNKI) form the STI1 2 domain.

Co-chaperone that forms a complex with HSP70 and HSP90 and preproteins (e.g. chloroplast preproteins). Post-translationally, phosphorylated. Acetylated.

It is found in the cytoplasm. Its subcellular location is the nucleus. Mediates the association of the molecular chaperones HSP70 and HSP90. Mediates nuclear encoded chloroplast preproteins binding to HSP90 prior to chloroplastic sorting. The polypeptide is Hsp70-Hsp90 organizing protein 2 (HOP2) (Arabidopsis thaliana (Mouse-ear cress)).